The sequence spans 155 residues: 3-hydroxyacyl-[acyl-carrier-protein] dehydratase FabZ (155 aa).

Residue H58 is part of the active site.

This sequence belongs to the thioester dehydratase family. FabZ subfamily.

It localises to the cytoplasm. It carries out the reaction a (3R)-hydroxyacyl-[ACP] = a (2E)-enoyl-[ACP] + H2O. In terms of biological role, involved in unsaturated fatty acids biosynthesis. Catalyzes the dehydration of short chain beta-hydroxyacyl-ACPs and long chain saturated and unsaturated beta-hydroxyacyl-ACPs. This chain is 3-hydroxyacyl-[acyl-carrier-protein] dehydratase FabZ, found in Rhizobium leguminosarum bv. trifolii (strain WSM2304).